The sequence spans 1954 residues: Chromodomain-helicase-DNA-binding protein 5 (1954 aa).

Disordered stretches follow at residues 1–134 and 225–338; these read MRGP…PKSS and PLAV…GDGY. 2 stretches are compositionally biased toward acidic residues: residues 17–37 and 72–90; these read EEME…EAFD and NDEL…ESEG. A compositionally biased stretch (basic residues) spans 96–115; the sequence is NKKKKKKLKDKKEKKAKRKK. Positions 227-237 are enriched in pro residues; that stretch reads AVSPPQVPQPV. Over residues 251–272 the composition is skewed to basic residues; sequence GVRKKIKGSKDGKKKGKGKKTA. Residues 291–301 are compositionally biased toward acidic residues; that stretch reads SEEDEREESDF. A compositionally biased stretch (basic residues) spans 321–330; that stretch reads KKSKRRRKKK. 2 consecutive PHD-type zinc fingers follow at residues 343–390 and 416–463; these read QDYC…CEKE and MEFC…CTCP. The interval 343 to 653 is histone-binding; it reads QDYCEVCQQG…HRELMLGEDT (311 aa). Residues 497–554 form the Chromo 1 domain; sequence LPPPKPLEGIPEREFFVKWAGLSYWHCSWVKELQLELYHTVMYRNYQRKNDMDEPPPF. The disordered stretch occupies residues 549-571; the sequence is DEPPPFDYGSGDEDGKSEKRKNK. Over residues 561–571 the composition is skewed to basic and acidic residues; it reads EDGKSEKRKNK. One can recognise a Chromo 2 domain in the interval 592 to 653; that stretch reads MMIHRILNHS…HRELMLGEDT (62 aa). In terms of domain architecture, Helicase ATP-binding spans 712 to 896; the sequence is RFSWAQGTDT…FHLLNFLTPE (185 aa). 725 to 732 is a binding site for ATP; the sequence is DEMGLGKT. Positions 847–850 match the DEAH box motif; sequence DEAH. One can recognise a Helicase C-terminal domain in the interval 1028 to 1193; that stretch reads LLQKMLKKLR…MTKQELDDIL (166 aa). Disordered stretches follow at residues 1209 to 1253, 1351 to 1411, 1524 to 1564, 1597 to 1640, and 1658 to 1696; these read MSQG…EDSS, YNDA…LPPL, YSTP…APLG, AALD…REEV, and SRGD…KKED. 2 stretches are compositionally biased toward acidic residues: residues 1355–1366 and 1376–1385; these read SQEDQEWQDELS and SEDEDEDFEE. An N5-methylglutamine modification is found at Q1390. A Phosphoserine modification is found at S1554. Residues 1554–1564 show a composition bias toward low complexity; that stretch reads SPAHLLPAPLG. Basic and acidic residues-rich tracts occupy residues 1600–1627 and 1658–1678; these read DRVE…ETEK and SRGD…KEPI.

This sequence belongs to the SNF2/RAD54 helicase family. As to quaternary structure, component of the nucleosome remodeling and deacetylase (NuRD) repressor complex, composed of core proteins MTA1, MTA2, MTA3, RBBP4, RBBP7, HDAC1, HDAC2, MBD2, MBD3, and peripherally associated proteins CDK2AP1, CDK2AP2, GATAD2A, GATAD2B, CHD3, CHD4 and CHD5. The exact stoichiometry of the NuRD complex is unknown, and some subunits such as MBD2 and MBD3, GATAD2A and GATAD2B, and CHD3, CHD4 and CHD5 define mutually exclusive NuRD complexes. Interacts with HDAC2. In terms of processing, methylated at Gln-1390 by N6AMT1. In terms of tissue distribution, preferentially expressed in total brain, fetal brain, and cerebellum. It is also moderately expressed in the adrenal gland and detected in testis.

The protein localises to the nucleus. Its subcellular location is the chromosome. The enzyme catalyses ATP + H2O = ADP + phosphate + H(+). Functionally, ATP-dependent chromatin-remodeling factor that binds DNA through histones and regulates gene transcription. May specifically recognize and bind trimethylated 'Lys-27' (H3K27me3) and non-methylated 'Lys-4' of histone H3. Acts as a component of the histone deacetylase NuRD complex which participates in the remodeling of chromatin. Plays a role in the development of the nervous system by activating the expression of genes promoting neuron terminal differentiation. In parallel, it may also positively regulate the trimethylation of histone H3 at 'Lys-27' thereby specifically repressing genes that promote the differentiation into non-neuronal cell lineages. Regulates the expression of genes involved in cell proliferation and differentiation. Downstream activated genes may include CDKN2A that positively regulates the p53/TP53 pathway, which in turn, prevents cell proliferation. In spermatogenesis, it probably regulates histone hyperacetylation and the replacement of histones by transition proteins in chromatin, a crucial step in the condensation of spermatid chromatin and the production of functional spermatozoa. In Homo sapiens (Human), this protein is Chromodomain-helicase-DNA-binding protein 5.